An 891-amino-acid polypeptide reads, in one-letter code: Dynein axonemal intermediate chain 3 (891 aa).

The segment covering 1 to 17 has biased composition (basic residues); it reads MAPKQKKKTSRGKKRLK. Residues 1–22 form a disordered region; the sequence is MAPKQKKKTSRGKKRLKPVLAA. WD repeat units lie at residues 395 to 435, 477 to 533, 670 to 709, and 713 to 753; these read ESPD…DRIE, GHKK…PLTP, IHDG…GPLL, and CAPK…HEPA. The stretch at 818-861 forms a coiled coil; sequence LEYVEQRKKIREQEKKEMELEMAKKKVKTYQKSKEQMQAELKMD.

In terms of assembly, interacts with ACTR2; this interaction reduces binding of the Arp2/3 complex to the VCA domain of nucleation promoting factors. Part of the multisubunit axonemal dynein complex formed at least of two heavy chains and a number of intermediate and light chains. Found in a associated with the catalytic heavy chain DNAH2, the intermediate chain DNAI4, and the light chain DYNLT1.

The protein localises to the cytoplasm. Its function is as follows. Acts as a negative regulator of cell migration, invasion, and metastasis downstream of p53/TP53, through inhibition of Arp2/3 complex-mediated actin polymerization. Via its association with the multisubunit axonemal dynein complex, is potentially involved in the regulation of cilia function. May play a role in osteogenesis of dental tissue-derived mesenchymal stem cells. This chain is Dynein axonemal intermediate chain 3, found in Homo sapiens (Human).